The primary structure comprises 159 residues: MNISIITVGKLKEKYLKQGIAEYTKRLQAYAKIDIIELADEKAPEHLSEQDMKIIKDKEGERILSKINPDAHVIALAIEGKMKTSEELADTIDKLATYGKSKVCFVIGGSLGLSDAVMQRANEKLSFSRMTFPHQLMRLVLVEQVYRAFRIVRGEPYHK.

Residues L76, G108, and 127–132 contribute to the S-adenosyl-L-methionine site; that span reads FSRMTF.

The protein belongs to the RNA methyltransferase RlmH family. Homodimer.

It localises to the cytoplasm. The enzyme catalyses pseudouridine(1915) in 23S rRNA + S-adenosyl-L-methionine = N(3)-methylpseudouridine(1915) in 23S rRNA + S-adenosyl-L-homocysteine + H(+). Specifically methylates the pseudouridine at position 1915 (m3Psi1915) in 23S rRNA. In Bacillus pumilus (strain SAFR-032), this protein is Ribosomal RNA large subunit methyltransferase H.